We begin with the raw amino-acid sequence, 182 residues long: Transmembrane protein 11 homolog, mitochondrial (182 aa).

S25 is modified (phosphoserine). A run of 2 helical transmembrane segments spans residues 70–89 (TAVA…RDRP) and 91–108 (IAAP…LYTV).

Belongs to the TMEM11 family.

Its subcellular location is the mitochondrion inner membrane. Its function is as follows. Plays a role in mitochondrial morphogenesis. This is Transmembrane protein 11 homolog, mitochondrial (Pmi) from Drosophila melanogaster (Fruit fly).